Consider the following 544-residue polypeptide: uncharacterized protein (544 aa).

Positions 1 to 34 are cleaved as a signal peptide; sequence MIARRMLCARPWGPSCVVCALCGALAALVPAVGA. The segment at 38–69 is disordered; it reads AVPAPGTPAPPAHTASEAVPPAPEPRAEGEQP.

It belongs to the TP096X family.

This is an uncharacterized protein from Treponema pallidum (strain Nichols).